A 179-amino-acid chain; its full sequence is NADH-quinone oxidoreductase subunit I (179 aa).

2 consecutive 4Fe-4S ferredoxin-type domains span residues 45-74 and 90-119; these read RHPD…VEAA and KVYE…LGNE. Cysteine 54, cysteine 57, cysteine 60, cysteine 64, cysteine 99, cysteine 102, cysteine 105, and cysteine 109 together coordinate [4Fe-4S] cluster. Residues 146-179 are disordered; the sequence is PQRREAQRTGKPVRLGFKVPKGPRPELEGVEYPR. The segment covering 168 to 179 has biased composition (basic and acidic residues); it reads PRPELEGVEYPR.

The protein belongs to the complex I 23 kDa subunit family. As to quaternary structure, NDH-1 is composed of 15 different subunits. Subunits NuoA, H, J, K, L, M, N constitute the membrane sector of the complex. It depends on [4Fe-4S] cluster as a cofactor.

It is found in the cell membrane. It catalyses the reaction a quinone + NADH + 5 H(+)(in) = a quinol + NAD(+) + 4 H(+)(out). In terms of biological role, NDH-1 shuttles electrons from NADH, via FMN and iron-sulfur (Fe-S) centers, to quinones in the respiratory chain. The immediate electron acceptor for the enzyme in this species is believed to be ubiquinone. Couples the redox reaction to proton translocation (for every two electrons transferred, four hydrogen ions are translocated across the cytoplasmic membrane), and thus conserves the redox energy in a proton gradient. The sequence is that of NADH-quinone oxidoreductase subunit I from Deinococcus geothermalis (strain DSM 11300 / CIP 105573 / AG-3a).